We begin with the raw amino-acid sequence, 639 residues long: Chaperone protein DnaK (639 aa).

Threonine 198 carries the post-translational modification Phosphothreonine; by autocatalysis. Residues 603–618 are compositionally biased toward low complexity; sequence AKAQTQGGAQEGAAKQ. The tract at residues 603-639 is disordered; sequence AKAQTQGGAQEGAAKQSNATADDVVDAEFEEVKDDKK. Residues 625-639 are compositionally biased toward acidic residues; sequence DVVDAEFEEVKDDKK.

This sequence belongs to the heat shock protein 70 family.

Functionally, acts as a chaperone. The polypeptide is Chaperone protein DnaK (Shewanella sp. (strain MR-4)).